A 122-amino-acid chain; its full sequence is Cysteine proteinase inhibitor 5 (122 aa).

Positions 1–26 (MTSKVVFLLLLSLVVVLLPLYASAAA) are cleaved as a signal peptide. The Cystatin domain occupies 29–117 (GGWSPISNVT…RNLTSFEPAN (89 aa)). N-linked (GlcNAc...) asparagine glycosylation occurs at asparagine 36. Residues 72 to 76 (QVVSG) carry the Secondary area of contact motif. An N-linked (GlcNAc...) asparagine glycan is attached at asparagine 109.

The protein belongs to the cystatin family. Phytocystatin subfamily.

It localises to the secreted. Specific inhibitor of cysteine proteinases. Probably involved in the regulation of endogenous processes and in defense against pests and pathogens. The polypeptide is Cysteine proteinase inhibitor 5 (CYS5) (Arabidopsis thaliana (Mouse-ear cress)).